Reading from the N-terminus, the 2506-residue chain is Highly reducing polyketide synthase rstn3 (2506 aa).

Positions 8–436 constitute a Ketosynthase family 3 (KS3) domain; the sequence is VEPIAIVGMA…GANAHAILDA (429 aa). Residues Cys183, His318, and His358 each act as for beta-ketoacyl synthase activity in the active site. The 329-residue stretch at 547-875 folds into the Malonyl-CoA:ACP transacylase (MAT) domain; that stretch reads FIFTGQGAQW…KMVGSLFLSG (329 aa). An N-terminal hotdog fold region spans residues 941-1050; the sequence is HDLLGSRLPG…ASDQSISSVE (110 aa). One can recognise a PKS/mFAS DH domain in the interval 941–1212; sequence HDLLGSRLPG…FSSLETAVGE (272 aa). The active-site Proton acceptor; for dehydratase activity is His973. Positions 1060-1212 are C-terminal hotdog fold; sequence NKDSYDRRWY…FSSLETAVGE (153 aa). Catalysis depends on Asp1125, which acts as the Proton donor; for dehydratase activity. Positions 1263 to 1563 are methyltransferase (CMet) domain; sequence VTRLAIRSSA…SGADIVLDDY (301 aa). One can recognise an Enoyl reductase (ER) domain in the interval 1827–2093; that stretch reads GRVDSFYFKE…QDDYVGRVVL (267 aa). Residues 2116 to 2296 form the Ketoreductase (KR) domain; sequence ASYLLIGCLG…QATSIALGMI (181 aa). The region spanning 2423 to 2501 is the Carrier domain; the sequence is AVKVTTLGLI…DLAEKVVALA (79 aa). Ser2460 carries the O-(pantetheine 4'-phosphoryl)serine modification.

The cofactor is pantetheine 4'-phosphate.

Its pathway is antifungal biosynthesis. Its function is as follows. Highly reducing polyketide synthase; part of the gene cluster that mediates the biosynthesis of the tetrahydropyranyl antifungal agent restricticin that acts as an inhibitor of CYP51 and blocks the ergosterol biosynthesis. The highly reducing polyketide synthase rstn3, the short chain dehydrogenase rstn4, the cyclase rstn5, the FAD-dependent monooxygenase rstn6 and the enoylreductase rstn7 are required to generate the first stable intermediate desmethylrestrictinol. Rstn3 with rstn7 biosynthesize the first polyketide chain intermediate that is reduced by rstn4, followed by epoxidation by rstn6 before 6-endo cyclization via epoxide opening by rstn5 leads to desmethylrestrictinol. The methyltransferase rstn1 then catalyzes the C4 O-methylation of desmethylrestrictinol to produce restrictinol, and the nonribosomal peptide synthetase rstn8 catalyzes the C3 esterification of restrictinol with glycine that leads to restricticin. The sequence is that of Highly reducing polyketide synthase rstn3 from Aspergillus nomiae NRRL (strain ATCC 15546 / NRRL 13137 / CBS 260.88 / M93).